A 164-amino-acid chain; its full sequence is Phosphopantetheine adenylyltransferase (164 aa).

S9 provides a ligand contact to substrate. Residues 9 to 10 (SF) and H17 each bind ATP. The substrate site is built by K41, L73, and K87. Residues 88 to 90 (GLR), E98, and 122 to 128 (YSYLSSS) each bind ATP.

It belongs to the bacterial CoaD family. As to quaternary structure, homohexamer. Requires Mg(2+) as cofactor.

The protein resides in the cytoplasm. It carries out the reaction (R)-4'-phosphopantetheine + ATP + H(+) = 3'-dephospho-CoA + diphosphate. It functions in the pathway cofactor biosynthesis; coenzyme A biosynthesis; CoA from (R)-pantothenate: step 4/5. In terms of biological role, reversibly transfers an adenylyl group from ATP to 4'-phosphopantetheine, yielding dephospho-CoA (dPCoA) and pyrophosphate. The sequence is that of Phosphopantetheine adenylyltransferase from Rhodococcus erythropolis (strain PR4 / NBRC 100887).